A 579-amino-acid polypeptide reads, in one-letter code: MMSVQKANTVSRQKATGAHFTPDKLAEVIAKRILDYFKGEKNRVIRVLDPACGDGELLLAINKVAQSMNIQLELIGVDFDIDAINIANERLSRSGHKNFRLINKDFLEMVSEGDNYDLFNIEELEPVDIIIANPPYVRTQILGAEKAQKLREKFNLKGRVDLYQAFLVAMTQQLKSNGIIGVITSNRYLTTKGGGSTRKFLVSNFNILEIMDLGDSKFFEAAVLPAIFFGEKKNKEYQKENSNVPKFFKIYEQSDIEASSSVNSEFNSLIELLEVNKSGLYSVEDKTYSISLGKIISPENYKEPWILATEDEYEWFMKVNQNAYGFIEDFAHVKVGIKTTADSVFIRSDWGELPEEQIPEDKLLRPIISADQANKWSVSLVGNNKKVLYTHEIRDGQIKAINLEEFPRAKNYLESHKERLASRKYVLKANRNWYEIWVPHDPSLWDKPKIIFPDTSPEPKFFYEDKGSVVDGNCYWIIPKKENSNDILFLIMGICNSKFMSKYHDIAFQNKLYAGRRRYLTQYVNKYPIPDPESIYSKEIISLVRELVNNKKETQDINEIENRIEKLILRAFDIESLKY.

It belongs to the N(4)/N(6)-methyltransferase family.

It catalyses the reaction a 2'-deoxyadenosine in DNA + S-adenosyl-L-methionine = an N(6)-methyl-2'-deoxyadenosine in DNA + S-adenosyl-L-homocysteine + H(+). Functionally, a gamma subtype methylase, recognizes the double-stranded sequence 5'-ATCGAT-3', methylation on A-5 on both strands, and protects the DNA from cleavage by the BanIII endonuclease. The chain is Type II methyltransferase M.BseCI from Geobacillus stearothermophilus (Bacillus stearothermophilus).